Consider the following 240-residue polypeptide: Methylthioribulose-1-phosphate dehydratase (240 aa).

Residue Cys-99 coordinates substrate. Zn(2+) is bound by residues His-116 and His-118. The active-site Proton donor/acceptor is the Glu-145. A Zn(2+)-binding site is contributed by His-201.

Belongs to the aldolase class II family. MtnB subfamily. Zn(2+) is required as a cofactor.

The protein localises to the cytoplasm. It carries out the reaction 5-(methylsulfanyl)-D-ribulose 1-phosphate = 5-methylsulfanyl-2,3-dioxopentyl phosphate + H2O. Its pathway is amino-acid biosynthesis; L-methionine biosynthesis via salvage pathway; L-methionine from S-methyl-5-thio-alpha-D-ribose 1-phosphate: step 2/6. Catalyzes the dehydration of methylthioribulose-1-phosphate (MTRu-1-P) into 2,3-diketo-5-methylthiopentyl-1-phosphate (DK-MTP-1-P). The sequence is that of Methylthioribulose-1-phosphate dehydratase from Ajellomyces capsulatus (strain H143) (Darling's disease fungus).